A 383-amino-acid chain; its full sequence is MEPRAVGVSKQDIREQIWGYMESQNLADFPRPVHHRIPNFKGSYLACQNIKDLDVFARTQEVKVDPDKPLEGVRLLVLQSKKTLLVPTPRLRTGLFNKITPPPGATKDILRKCATSQGVRNYSVPIGLDSRVLVDLVVVGSVAVSEKGWRIGKGEGYADLEYAMMVSMGAVSKETPVVTIVHDCQVVDIPEELVEEHDITVDYILTPTRVIATGCKRPKPMGITWFKISLEMMEKIPILRSLRAREQQAGKDVTLQGEHQHLPEPGCQQTVPLSVGRRPPDTPGPETNSMEAAPGSPPGEGAPLAADVYVGNLPGDARVSDLKRALRELGSVPLRLTWQGPRRRAFLHYPDSAAAQQAVSCLQGLRLGTDTLRVALARQQRDK.

Positions 249 to 301 (AGKDVTLQGEHQHLPEPGCQQTVPLSVGRRPPDTPGPETNSMEAAPGSPPGEG) are disordered. Residues 306–379 (ADVYVGNLPG…DTLRVALARQ (74 aa)) form the RRM domain.

In Homo sapiens (Human), this protein is Methenyltetrahydrofolate synthase domain-containing protein (MTHFSD).